The following is a 336-amino-acid chain: MITDTIVELEGVNGERFNLTTGDQGVYLATDVEGCFYDPPVKVVVEEPGNYPGARYLSHRALKRDIVFGVVILNDAKQGPRSWLSRDSEWRKAWAFNRTCKLYVTTPDSGTRYLKLALFESPTVKMDTDPRGKPLEVTVMSCIAYDPFWYEDDKVFSAKTKTDTRFDPSFWTPPWPWEELPKETLRIKVGREQGGLNPTDQYIFPKWTVPGSTEKVPNFPWPFPPNVPIPWETAPFTQFVIPDYSFEDEEFRNRRLKTPGLIYGENCVIDTDRREEQIASESGSPVWARMNGVRFRNSIPPYTEEAEFVIDASGCAPGQVVTLRLTRPWSRCWGLE.

This chain is Minor tail protein Gp27 (27), found in Mycobacterium phage L5 (Mycobacteriophage L5).